The sequence spans 138 residues: Thyrotropin subunit beta (138 aa).

Residues Met-1–Ser-20 form the signal peptide. Disulfide bonds link Cys-22–Cys-72, Cys-36–Cys-87, Cys-39–Cys-125, Cys-47–Cys-103, Cys-51–Cys-105, and Cys-108–Cys-115. Asn-43 carries an N-linked (GlcNAc...) asparagine glycan. The propeptide occupies Val-133–Ile-138.

The protein belongs to the glycoprotein hormones subunit beta family. As to quaternary structure, heterodimer of a common alpha chain and a unique beta chain which confers biological specificity to thyrotropin, lutropin, follitropin and gonadotropin.

The protein resides in the secreted. Its function is as follows. Indispensable for the control of thyroid structure and metabolism. The polypeptide is Thyrotropin subunit beta (TSHB) (Canis lupus familiaris (Dog)).